The primary structure comprises 338 residues: Holliday junction branch migration complex subunit RuvB (338 aa).

The segment at 4–185 (EDQKILDAKP…FGIVAHMQFY (182 aa)) is large ATPase domain (RuvB-L). Residues Leu-24, Arg-25, Gly-66, Lys-69, Thr-70, Thr-71, 132 to 134 (EDF), Arg-175, Tyr-185, and Arg-222 contribute to the ATP site. Mg(2+) is bound at residue Thr-70. Residues 186–256 (PVSDLKLIAK…IVDNALNKLH (71 aa)) are small ATPAse domain (RuvB-S). Positions 259–338 (ARGLDETDLK…LQIPYQTGLS (80 aa)) are head domain (RuvB-H). Arg-314 and Arg-319 together coordinate DNA.

It belongs to the RuvB family. Homohexamer. Forms an RuvA(8)-RuvB(12)-Holliday junction (HJ) complex. HJ DNA is sandwiched between 2 RuvA tetramers; dsDNA enters through RuvA and exits via RuvB. An RuvB hexamer assembles on each DNA strand where it exits the tetramer. Each RuvB hexamer is contacted by two RuvA subunits (via domain III) on 2 adjacent RuvB subunits; this complex drives branch migration. In the full resolvosome a probable DNA-RuvA(4)-RuvB(12)-RuvC(2) complex forms which resolves the HJ.

It is found in the cytoplasm. It catalyses the reaction ATP + H2O = ADP + phosphate + H(+). Functionally, the RuvA-RuvB-RuvC complex processes Holliday junction (HJ) DNA during genetic recombination and DNA repair, while the RuvA-RuvB complex plays an important role in the rescue of blocked DNA replication forks via replication fork reversal (RFR). RuvA specifically binds to HJ cruciform DNA, conferring on it an open structure. The RuvB hexamer acts as an ATP-dependent pump, pulling dsDNA into and through the RuvAB complex. RuvB forms 2 homohexamers on either side of HJ DNA bound by 1 or 2 RuvA tetramers; 4 subunits per hexamer contact DNA at a time. Coordinated motions by a converter formed by DNA-disengaged RuvB subunits stimulates ATP hydrolysis and nucleotide exchange. Immobilization of the converter enables RuvB to convert the ATP-contained energy into a lever motion, pulling 2 nucleotides of DNA out of the RuvA tetramer per ATP hydrolyzed, thus driving DNA branch migration. The RuvB motors rotate together with the DNA substrate, which together with the progressing nucleotide cycle form the mechanistic basis for DNA recombination by continuous HJ branch migration. Branch migration allows RuvC to scan DNA until it finds its consensus sequence, where it cleaves and resolves cruciform DNA. This Oenococcus oeni (strain ATCC BAA-331 / PSU-1) protein is Holliday junction branch migration complex subunit RuvB.